Here is a 345-residue protein sequence, read N- to C-terminus: 3-dehydroquinate synthase (345 aa).

Residues Asp-62 to Lys-67, Gly-96 to Asp-100, Thr-120 to Thr-121, Lys-133, Lys-142, and Phe-160 to Thr-163 each bind NAD(+). Positions 175, 233, and 250 each coordinate Zn(2+).

This sequence belongs to the sugar phosphate cyclases superfamily. Dehydroquinate synthase family. It depends on Co(2+) as a cofactor. Requires Zn(2+) as cofactor. NAD(+) is required as a cofactor.

Its subcellular location is the cytoplasm. It catalyses the reaction 7-phospho-2-dehydro-3-deoxy-D-arabino-heptonate = 3-dehydroquinate + phosphate. It functions in the pathway metabolic intermediate biosynthesis; chorismate biosynthesis; chorismate from D-erythrose 4-phosphate and phosphoenolpyruvate: step 2/7. Functionally, catalyzes the conversion of 3-deoxy-D-arabino-heptulosonate 7-phosphate (DAHP) to dehydroquinate (DHQ). This chain is 3-dehydroquinate synthase, found in Campylobacter concisus (strain 13826).